We begin with the raw amino-acid sequence, 368 residues long: Divinyl chlorophyll a/b light-harvesting protein PcbA (368 aa).

A run of 6 helical transmembrane segments spans residues 27 to 47 (FIASHIGHTGLICFGAGANTL), 63 to 83 (GFVVLPHLAGLGIGGIENGVI), 89 to 109 (MLVVAVFHLIFSAVYAGGAML), 203 to 223 (VMGGHAFLAFFLSAGAIWHIF), 243 to 263 (FVLSTSLAGAAFIAFVAAFWA), and 307 to 327 (LSNFHFYLGFFYLQGHFWHGL).

This sequence belongs to the PsbB/PsbC family. IsiA/Pcb subfamily. As to quaternary structure, the antenna complex consists of divinyl chlorophylls (a and b) and divinyl chlorophyll a/b binding proteins. Forms complexes with PSII, consisting of a PSII dimer and 4 or 8 PcbA subunits. These complexes are also found under conditions of iron-starvation. The cofactor is divinyl chlorophyll a. Divinyl chlorophyll b serves as cofactor.

It is found in the cellular thylakoid membrane. Its function is as follows. The antenna complex functions as a light receptor, it captures and delivers excitation energy to photosystems II. The Prochlorales pcb genes are not related to higher plant LHCs. This chain is Divinyl chlorophyll a/b light-harvesting protein PcbA (pcbA), found in Prochlorococcus marinus (strain MIT 9313).